Reading from the N-terminus, the 188-residue chain is Elongation factor P (188 aa).

Belongs to the elongation factor P family.

It localises to the cytoplasm. It participates in protein biosynthesis; polypeptide chain elongation. Functionally, involved in peptide bond synthesis. Stimulates efficient translation and peptide-bond synthesis on native or reconstituted 70S ribosomes in vitro. Probably functions indirectly by altering the affinity of the ribosome for aminoacyl-tRNA, thus increasing their reactivity as acceptors for peptidyl transferase. The polypeptide is Elongation factor P (Nitrosospira multiformis (strain ATCC 25196 / NCIMB 11849 / C 71)).